Consider the following 96-residue polypeptide: Small ribosomal subunit protein bS21 (96 aa).

Basic and acidic residues predominate over residues 37–52; it reads EKPSEKKAREKAEAVR. The segment at 37–96 is disordered; it reads EKPSEKKAREKAEAVRRARKLARKKLQREGLLPSKPKPVFGADRGRGAAGGAGGAPRPAR. Residues 53-62 show a composition bias toward basic residues; the sequence is RARKLARKKL.

This sequence belongs to the bacterial ribosomal protein bS21 family.

This chain is Small ribosomal subunit protein bS21, found in Afipia carboxidovorans (strain ATCC 49405 / DSM 1227 / KCTC 32145 / OM5) (Oligotropha carboxidovorans).